Consider the following 172-residue polypeptide: 5'(3')-deoxyribonucleotidase (172 aa).

The active-site Nucleophile is the Asp8. Mg(2+)-binding residues include Asp8, Asp10, and Asp132. The active-site Proton donor is Asp10.

Belongs to the 5'(3')-deoxyribonucleotidase family. The cofactor is Mg(2+).

Dephosphorylates nucleoside monophosphates such as the 5' and 2'(3')-phosphates of deoxyribonucleotides in vitro. Also catalyzes the dephosphorylation of coenzyme A (CoA), pyridoxal-5'-phosphate (PLP), riboflavine-5-phosphate (FMN) and nicotinamide adenine dinucleotide phosphate (NADP) in vitro. The chain is 5'(3')-deoxyribonucleotidase (yorS) from Bacillus subtilis (strain 168).